We begin with the raw amino-acid sequence, 137 residues long: Large ribosomal subunit protein uL16 (137 aa).

It belongs to the universal ribosomal protein uL16 family. Part of the 50S ribosomal subunit.

In terms of biological role, binds 23S rRNA and is also seen to make contacts with the A and possibly P site tRNAs. This Wolbachia pipientis subsp. Culex pipiens (strain wPip) protein is Large ribosomal subunit protein uL16.